Consider the following 873-residue polypeptide: Zinc fingers and homeoboxes protein 1 (873 aa).

The interval 1–63 is disordered; sequence MASRRKSTTP…ESVDSDNQQN (63 aa). The span at 18-30 shows a compositional bias: acidic residues; that stretch reads QDPDLELISDLEE. At Thr-36 the chain carries Phosphothreonine. Ser-45, Ser-47, and Ser-48 each carry phosphoserine. 2 C2H2-type zinc fingers span residues 70 to 93 and 102 to 125; these read YECKYCTFQTPDLNMFTFHVDSEH and YVCVECNFLTKRYDALSEHNLKYH. Lys-159 participates in a covalent cross-link: Glycyl lysine isopeptide (Lys-Gly) (interchain with G-Cter in SUMO2). The interval 198-247 is disordered; sequence VHHNSAEGTSEEKENGVKASREENAENTSSSASESNTSTSTVNQVHPSPA. At Ser-202 the chain carries Phosphoserine. Basic and acidic residues predominate over residues 207–221; sequence SEEKENGVKASREEN. Residues 223 to 238 are compositionally biased toward low complexity; that stretch reads ENTSSSASESNTSTST. Residues 272–432 form a required for dimerization region; sequence NSNLVPKVLI…QTNVQKSQVP (161 aa). Positions 272–564 are required for interaction with NFYA; sequence NSNLVPKVLI…SQPKQSWNPF (293 aa). The segment at residues 284–346 is a DNA-binding region (homeobox 1); the sequence is NSIPTYNAAL…LKHGVSWTPE (63 aa). A disordered region spans residues 430–455; sequence QVPAAQPAAETKPATAAVPSSPSVRP. Residues Lys-441 and Lys-485 each participate in a glycyl lysine isopeptide (Lys-Gly) (interchain with G-Cter in SUMO2) cross-link. The segment at residues 464–526 is a DNA-binding region (homeobox 2); sequence SFGIRAKKTK…YNQRNSKSNQ (63 aa). Disordered regions lie at residues 540 to 568, 627 to 664, and 731 to 767; these read IDSSDETPEPPAAAASQPKQSWNPFPDFA, DEKVEVDESNVGSSKEEPGENSPGDEAVAPKSAGTGKI, and SSSLNGLSSLRKRGRGRPKGRGRGRPRGRPRGGKRMN. Positions 551-560 are enriched in low complexity; that stretch reads AAAASQPKQS. Residues 569–631 constitute a DNA-binding region (homeobox 3); that stretch reads PQKFKEKTAE…TKALKDEKVE (63 aa). Lys-629 participates in a covalent cross-link: Glycyl lysine isopeptide (Lys-Gly) (interchain with G-Cter in SUMO2). Phosphoserine is present on Ser-648. Positions 660–722 form a DNA-binding region, homeobox 4; that stretch reads GTGKICKKTP…YAWKNGNLKW (63 aa). The tract at residues 734 to 768 is required for nuclear localization; the sequence is LNGLSSLRKRGRGRPKGRGRGRPRGRPRGGKRMNT. Over residues 740 to 764 the composition is skewed to basic residues; it reads LRKRGRGRPKGRGRGRPRGRPRGGK. The residue at position 774 (Ser-774) is a Phosphoserine. The homeobox 5 DNA-binding region spans 777–832; it reads KFKTGTAILKDYYLKHKFLNEQDLDELVNRSHMGYEQVREWFAERQRRSELGIELF. A disordered region spans residues 829–873; it reads IELFEENEEEDEVIDDQEEDEEETDDSDTWEPPRHVKRKLSKSDD. A compositionally biased stretch (acidic residues) spans 831-857; it reads LFEENEEEDEVIDDQEEDEEETDDSDT. The tract at residues 831–873 is required for repressor activity; the sequence is LFEENEEEDEVIDDQEEDEEETDDSDTWEPPRHVKRKLSKSDD. Residues 863 to 873 show a composition bias toward basic residues; it reads HVKRKLSKSDD.

This sequence belongs to the ZHX family. In terms of assembly, forms homodimers. Heterodimer (via HD1 domain) with ZHX2 (via HD1 domain). Also forms a heterodimer with ZHX3 which is a prerequisite for repressor activity. Interacts with ATF7IP and NFYA. Interacts (via homeobox domains) with DNMT3B (via PWWP domain). In terms of tissue distribution, ubiquitously expressed.

It localises to the nucleus. Functionally, acts as a transcriptional repressor. Increases DNMT3B-mediated repressive transcriptional activity when DNMT3B is tethered to DNA. May link molecule between DNMT3B and other co-repressor proteins. The sequence is that of Zinc fingers and homeoboxes protein 1 (Zhx1) from Rattus norvegicus (Rat).